The primary structure comprises 371 residues: 4-hydroxy-3-methylbut-2-en-1-yl diphosphate synthase (flavodoxin) (371 aa).

[4Fe-4S] cluster contacts are provided by cysteine 270, cysteine 273, cysteine 305, and glutamate 312.

The protein belongs to the IspG family. It depends on [4Fe-4S] cluster as a cofactor.

The enzyme catalyses (2E)-4-hydroxy-3-methylbut-2-enyl diphosphate + oxidized [flavodoxin] + H2O + 2 H(+) = 2-C-methyl-D-erythritol 2,4-cyclic diphosphate + reduced [flavodoxin]. It participates in isoprenoid biosynthesis; isopentenyl diphosphate biosynthesis via DXP pathway; isopentenyl diphosphate from 1-deoxy-D-xylulose 5-phosphate: step 5/6. Its function is as follows. Converts 2C-methyl-D-erythritol 2,4-cyclodiphosphate (ME-2,4cPP) into 1-hydroxy-2-methyl-2-(E)-butenyl 4-diphosphate. This Psychrobacter arcticus (strain DSM 17307 / VKM B-2377 / 273-4) protein is 4-hydroxy-3-methylbut-2-en-1-yl diphosphate synthase (flavodoxin).